The sequence spans 1416 residues: DNA-directed RNA polymerase subunit beta' (1416 aa).

Zn(2+)-binding residues include C60, C62, C75, and C78. D449, D451, and D453 together coordinate Mg(2+). Zn(2+) is bound by residues C781, C855, C862, and C865.

The protein belongs to the RNA polymerase beta' chain family. As to quaternary structure, the RNAP catalytic core consists of 2 alpha, 1 beta, 1 beta' and 1 omega subunit. When a sigma factor is associated with the core the holoenzyme is formed, which can initiate transcription. Requires Mg(2+) as cofactor. It depends on Zn(2+) as a cofactor.

The catalysed reaction is RNA(n) + a ribonucleoside 5'-triphosphate = RNA(n+1) + diphosphate. DNA-dependent RNA polymerase catalyzes the transcription of DNA into RNA using the four ribonucleoside triphosphates as substrates. In Treponema pallidum (strain Nichols), this protein is DNA-directed RNA polymerase subunit beta'.